The sequence spans 862 residues: Valine--tRNA ligase (862 aa).

Positions 47–57 (PTASGSLHIGH) match the 'HIGH' region motif. Residues 110–130 (EPGLTPPFEGGDNKSSKAADQ) are disordered. A compositionally biased stretch (basic and acidic residues) spans 120 to 129 (GDNKSSKAAD). The 'KMSKS' region motif lies at 584–588 (KMSKS). Lys587 contacts ATP.

This sequence belongs to the class-I aminoacyl-tRNA synthetase family. ValS type 2 subfamily. Monomer.

Its subcellular location is the cytoplasm. It catalyses the reaction tRNA(Val) + L-valine + ATP = L-valyl-tRNA(Val) + AMP + diphosphate. Its function is as follows. Catalyzes the attachment of valine to tRNA(Val). As ValRS can inadvertently accommodate and process structurally similar amino acids such as threonine, to avoid such errors, it has a 'posttransfer' editing activity that hydrolyzes mischarged Thr-tRNA(Val) in a tRNA-dependent manner. This Leifsonia xyli subsp. xyli (strain CTCB07) protein is Valine--tRNA ligase.